A 393-amino-acid polypeptide reads, in one-letter code: Putative odorant receptor 69a, isoform B (393 aa).

The Cytoplasmic segment spans residues M1–R39. A helical membrane pass occupies residues I40–G60. Over Y61–D69 the chain is Extracellular. The helical transmembrane segment at P70–G90 threads the bilayer. Residues T91–N138 are Cytoplasmic-facing. A helical membrane pass occupies residues T139–I159. The Extracellular portion of the chain corresponds to R160–N208. Residues M209–L229 form a helical membrane-spanning segment. Topologically, residues A230–N269 are cytoplasmic. The chain crosses the membrane as a helical span at residues F270–M290. At T291–L305 the chain is on the extracellular side. A helical membrane pass occupies residues L306 to S326. At G327 to Y365 the chain is on the cytoplasmic side. Residues K366 to F386 traverse the membrane as a helical segment. Residues T387–K393 are Extracellular-facing.

This sequence belongs to the insect chemoreceptor superfamily. Heteromeric odorant receptor channel (TC 1.A.69) family. Or49a subfamily. As to quaternary structure, interacts with Orco. Complexes exist early in the endomembrane system in olfactory sensory neurons (OSNs), coupling these complexes to the conserved ciliary trafficking pathway. As to expression, expressed in olfactory sensory neurons in the antenna.

The protein localises to the cell membrane. In terms of biological role, odorant receptor which mediates acceptance or avoidance behavior, depending on its substrates. The odorant receptor repertoire encodes a large collection of odor stimuli that vary widely in identity, intensity, and duration. May form a complex with Orco to form odorant-sensing units, providing sensitive and prolonged odorant signaling and calcium permeability. The chain is Putative odorant receptor 69a, isoform B (Or69a) from Drosophila melanogaster (Fruit fly).